Reading from the N-terminus, the 89-residue chain is Chromosomal protein MC1a (89 aa).

Protects DNA against thermal denaturation and modulates transcription. The chain is Chromosomal protein MC1a from Methanothrix soehngenii (Methanosaeta concilii).